The chain runs to 176 residues: Large ribosomal subunit protein bL17 (176 aa).

The tract at residues 124-176 (AAPKAARQDRSKRVKGSRKTEASAAKAAPAAQAAPELPAESDAPAAEAAPTEE) is disordered. The span at 145-176 (ASAAKAAPAAQAAPELPAESDAPAAEAAPTEE) shows a compositional bias: low complexity.

It belongs to the bacterial ribosomal protein bL17 family. As to quaternary structure, part of the 50S ribosomal subunit. Contacts protein L32.

In Chlorobium phaeovibrioides (strain DSM 265 / 1930) (Prosthecochloris vibrioformis (strain DSM 265)), this protein is Large ribosomal subunit protein bL17.